Reading from the N-terminus, the 260-residue chain is Transcription repressor OFP13 (260 aa).

The OVATE domain occupies 150–211 (VAMESEDPYG…VSAFVDLLSG (62 aa)).

As to expression, expressed in roots, rosette and cauline leaves, shoots, stems, flower buds and siliques.

Its subcellular location is the nucleus. Its function is as follows. Transcriptional repressor that regulates multiple aspects of plant growth and development through the regulation of BEL1-LIKE (BLH) and KNOX TALE (KNAT) homeodomain transcription factors. The sequence is that of Transcription repressor OFP13 (OFP13) from Arabidopsis thaliana (Mouse-ear cress).